A 180-amino-acid polypeptide reads, in one-letter code: Putative manganese efflux pump MntP (180 aa).

6 helical membrane-spanning segments follow: residues 1–21 (MLSV…ISIT), 34–54 (ILWY…IGYV), 63–83 (ISTY…LNMI), 103–123 (VTLL…TFAI), 129–149 (VIPC…GIFI), and 160–180 (KFQI…LLGF).

The protein belongs to the MntP (TC 9.B.29) family.

The protein resides in the cell membrane. In terms of biological role, probably functions as a manganese efflux pump. The sequence is that of Putative manganese efflux pump MntP from Methanosphaera stadtmanae (strain ATCC 43021 / DSM 3091 / JCM 11832 / MCB-3).